The chain runs to 277 residues: Release factor glutamine methyltransferase (277 aa).

Residues G119–G123, D142, W170, and N184 contribute to the S-adenosyl-L-methionine site. Position 184–187 (N184–Y187) interacts with substrate.

The protein belongs to the protein N5-glutamine methyltransferase family. PrmC subfamily.

It carries out the reaction L-glutaminyl-[peptide chain release factor] + S-adenosyl-L-methionine = N(5)-methyl-L-glutaminyl-[peptide chain release factor] + S-adenosyl-L-homocysteine + H(+). Its function is as follows. Methylates the class 1 translation termination release factors RF1/PrfA and RF2/PrfB on the glutamine residue of the universally conserved GGQ motif. This chain is Release factor glutamine methyltransferase, found in Buchnera aphidicola subsp. Baizongia pistaciae (strain Bp).